Here is a 128-residue protein sequence, read N- to C-terminus: MDIPKDRFYTKTHEWALPEGDTVLVGITDYAQDALGDVVYVELPEVGRVVEKGEAVAVVESVKTASDIYAPVAGEIVEVNLALEKTPELVNQDPYGEGWIFRLKPRDMGDLDELLDAEGYQEVLESEA.

In terms of domain architecture, Lipoyl-binding spans 22 to 104 (TVLVGITDYA…YGEGWIFRLK (83 aa)). N6-lipoyllysine is present on Lys-63.

The protein belongs to the GcvH family. The glycine cleavage system is composed of four proteins: P, T, L and H. Requires (R)-lipoate as cofactor.

Functionally, the glycine cleavage system catalyzes the degradation of glycine. The H protein shuttles the methylamine group of glycine from the P protein to the T protein. This is Glycine cleavage system H protein from Thermus thermophilus (strain ATCC BAA-163 / DSM 7039 / HB27).